Consider the following 765-residue polypeptide: MTVHNDTVEQAAAQPELEQPYRELGLKDDEYAHIREILGRRPTDAELTMYSVMWSEHCSYKSSKTHLRYFGETMTEEMGSKILAGIGENAGVVDIGDGNAVTFRVESHNHPSYVEPHQGAATGVGGIVRDIMAMGARPIAVMDQLRFGPADAPDTKRVLPGVVGGISHYGNCLGLPNIGGETVFDESYSGNPLVNALCVGTLKVDDLKLAFASGTGNKVMLFGSRTGLDGIGGVSVLASDTFEDGAERKLPAVQVGDPFAEKVLIECCLELYKSGIVVGIQDLGGAGLACATSELAAAGDGGMEINLDNVPLRAKDMTAAEILASESQERMCAVVTPENVEKFKEICAHWDVTCAEIGEVTTGKHLIIRHQGEVVVDAPAGTIADEAPVYDRPYARPEWQDALQEFKGVEKQDLTVALKKLVASPALCSRDFITEQYDRYVRGNTVQSHHANAGVLRIDEETGRGIAVSADASGRYTKLDPNMGTRLALAEAYRNVAVTGARPVAITNCLNYGSPENPDVMWQFRESVHGLADGAVELGIPVSGGNVSFYNQTGEEPILPTPVVGVLGVIDDVHKSIGNELGLVEEPEVLVLLGETKDEFGGSIWQQVSAREQGNESENGLNGLPPQVDLANEQRLADFFVGNEGVTAAHDLSEGGLAVTAFEMAKRSGVGLNLDLSKVHEDAFVAAFSESASRVLVATTADRVDMLLHRAEECGVPAVVIGQTTDNGELELGGESIAVSELREAWAATLPDLFGHAVGANSVVE.

The active site involves His-57. ATP contacts are provided by Tyr-60 and Arg-104. Glu-106 contacts Mg(2+). Residues 107–110 (SHNH) and Arg-129 contribute to the substrate site. The active-site Proton acceptor is the His-108. Asp-130 lines the Mg(2+) pocket. Gln-254 serves as a coordination point for substrate. Residue Asp-282 coordinates Mg(2+). Position 326 to 328 (326 to 328 (ESQ)) interacts with substrate. The ATP site is built by Asn-508 and Gly-545. Asn-546 is a binding site for Mg(2+). Ser-548 provides a ligand contact to substrate.

The protein belongs to the FGAMS family. In terms of assembly, monomer. Part of the FGAM synthase complex composed of 1 PurL, 1 PurQ and 2 PurS subunits.

Its subcellular location is the cytoplasm. The enzyme catalyses N(2)-formyl-N(1)-(5-phospho-beta-D-ribosyl)glycinamide + L-glutamine + ATP + H2O = 2-formamido-N(1)-(5-O-phospho-beta-D-ribosyl)acetamidine + L-glutamate + ADP + phosphate + H(+). Its pathway is purine metabolism; IMP biosynthesis via de novo pathway; 5-amino-1-(5-phospho-D-ribosyl)imidazole from N(2)-formyl-N(1)-(5-phospho-D-ribosyl)glycinamide: step 1/2. Functionally, part of the phosphoribosylformylglycinamidine synthase complex involved in the purines biosynthetic pathway. Catalyzes the ATP-dependent conversion of formylglycinamide ribonucleotide (FGAR) and glutamine to yield formylglycinamidine ribonucleotide (FGAM) and glutamate. The FGAM synthase complex is composed of three subunits. PurQ produces an ammonia molecule by converting glutamine to glutamate. PurL transfers the ammonia molecule to FGAR to form FGAM in an ATP-dependent manner. PurS interacts with PurQ and PurL and is thought to assist in the transfer of the ammonia molecule from PurQ to PurL. This Corynebacterium aurimucosum (strain ATCC 700975 / DSM 44827 / CIP 107346 / CN-1) (Corynebacterium nigricans) protein is Phosphoribosylformylglycinamidine synthase subunit PurL.